A 182-amino-acid polypeptide reads, in one-letter code: Lipoprotein signal peptidase (182 aa).

3 helical membrane passes run 12–32, 68–88, and 91–111; these read VAVF…TKAW, ATWV…VAGV, and ISMK…GNLI. Active-site residues include Asp127 and Asp140. A helical transmembrane segment spans residues 135 to 155; it reads VGNVADIYLVVAGVVLVILIL.

The protein belongs to the peptidase A8 family.

The protein resides in the cell membrane. It carries out the reaction Release of signal peptides from bacterial membrane prolipoproteins. Hydrolyzes -Xaa-Yaa-Zaa-|-(S,diacylglyceryl)Cys-, in which Xaa is hydrophobic (preferably Leu), and Yaa (Ala or Ser) and Zaa (Gly or Ala) have small, neutral side chains.. The protein operates within protein modification; lipoprotein biosynthesis (signal peptide cleavage). In terms of biological role, this protein specifically catalyzes the removal of signal peptides from prolipoproteins. In Bifidobacterium longum subsp. infantis (strain ATCC 15697 / DSM 20088 / JCM 1222 / NCTC 11817 / S12), this protein is Lipoprotein signal peptidase.